We begin with the raw amino-acid sequence, 186 residues long: Threonylcarbamoyl-AMP synthase (186 aa).

In terms of domain architecture, YrdC-like spans 5-186; sequence LLTIKAAAKL…WEAQTQKRLR (182 aa).

Belongs to the SUA5 family. TsaC subfamily.

It is found in the cytoplasm. It carries out the reaction L-threonine + hydrogencarbonate + ATP = L-threonylcarbamoyladenylate + diphosphate + H2O. Required for the formation of a threonylcarbamoyl group on adenosine at position 37 (t(6)A37) in tRNAs that read codons beginning with adenine. Catalyzes the conversion of L-threonine, HCO(3)(-)/CO(2) and ATP to give threonylcarbamoyl-AMP (TC-AMP) as the acyladenylate intermediate, with the release of diphosphate. The protein is Threonylcarbamoyl-AMP synthase of Hydrogenovibrio crunogenus (strain DSM 25203 / XCL-2) (Thiomicrospira crunogena).